A 276-amino-acid polypeptide reads, in one-letter code: Non-heme chloroperoxidase (276 aa).

Positions 24-254 (PVVFHHGWPL…NATLKSYEGL (231 aa)) constitute an AB hydrolase-1 domain. Catalysis depends on residues Ser97, Asp227, and His256.

The protein belongs to the AB hydrolase superfamily. Bacterial non-heme haloperoxidase / perhydrolase family. In terms of assembly, homodimer.

This is Non-heme chloroperoxidase (cpo) from Streptomyces lividans.